The primary structure comprises 311 residues: Malate dehydrogenase (311 aa).

NAD(+)-binding positions include 7-13 and aspartate 34; that span reads GAAGGIG. Substrate-binding residues include arginine 81 and arginine 87. NAD(+) contacts are provided by residues asparagine 94 and 117–119; that span reads ITN. Positions 119 and 153 each coordinate substrate. Histidine 177 serves as the catalytic Proton acceptor. Position 227 (methionine 227) interacts with NAD(+).

This sequence belongs to the LDH/MDH superfamily. MDH type 1 family. In terms of assembly, homodimer.

It carries out the reaction (S)-malate + NAD(+) = oxaloacetate + NADH + H(+). Functionally, catalyzes the reversible oxidation of malate to oxaloacetate. This chain is Malate dehydrogenase, found in Pseudoalteromonas atlantica (strain T6c / ATCC BAA-1087).